A 703-amino-acid chain; its full sequence is Polyribonucleotide nucleotidyltransferase (703 aa).

2 residues coordinate Mg(2+): Asp482 and Asp488. Positions 549–607 constitute a KH domain; that stretch reads PKAQVMKIPEDKVGLVIGPAGKNIKYIKEQFGASVWIDGANAYINAPTIEAVNKAADFI. The S1 motif domain maps to 617–679; sequence GGVYEGKVIR…EQNRLNLCSP (63 aa). The tract at residues 677–703 is disordered; sequence CSPDYQKPENQERPRKEQLNRKPHHRK. Residues 682–696 show a composition bias toward basic and acidic residues; sequence QKPENQERPRKEQLN.

This sequence belongs to the polyribonucleotide nucleotidyltransferase family. The cofactor is Mg(2+).

Its subcellular location is the cytoplasm. The catalysed reaction is RNA(n+1) + phosphate = RNA(n) + a ribonucleoside 5'-diphosphate. In terms of biological role, involved in mRNA degradation. Catalyzes the phosphorolysis of single-stranded polyribonucleotides processively in the 3'- to 5'-direction. The polypeptide is Polyribonucleotide nucleotidyltransferase (Hydrogenobaculum sp. (strain Y04AAS1)).